A 535-amino-acid polypeptide reads, in one-letter code: Flavin-containing monooxygenase 1 (535 aa).

Ala-2 is subject to N-acetylalanine. The Lumenal segment spans residues 2-513; sequence AKRVAIVGAG…TRIVQESSSP (512 aa). FAD-binding positions include 9–13, Glu-32, 40–41, and 61–62; these read GAGVS, LW, and NS. NADP(+) is bound by residues 60-61 and 195-198; these read SN and SGTD. The helical transmembrane segment at 514 to 534 threads the bilayer; the sequence is FESLLKLFAVLALLVSVFLIF. A topological domain (cytoplasmic) is located at residue Leu-535.

The protein belongs to the FMO family. FAD serves as cofactor. Liver.

The protein resides in the endoplasmic reticulum membrane. It carries out the reaction hypotaurine + NADPH + O2 + H(+) = taurine + NADP(+) + H2O. The enzyme catalyses hypotaurine + NADH + O2 + H(+) = taurine + NAD(+) + H2O. The catalysed reaction is trimethylamine + NADPH + O2 = trimethylamine N-oxide + NADP(+) + H2O. It catalyses the reaction N,N-dimethylaniline + NADPH + O2 + H(+) = N,N-dimethylaniline N-oxide + NADP(+) + H2O. Functionally, broad spectrum monooxygenase that catalyzes the oxygenation of a wide variety of nitrogen- and sulfur-containing compounds including xenobiotics. Catalyzes the S-oxygenation of hypotaurine to produce taurine, an organic osmolyte involved in cell volume regulation as well as a variety of cytoprotective and developmental processes. In vitro, catalyzes the N-oxygenation of trimethylamine (TMA) to produce trimethylamine N-oxide (TMAO) and could therefore participate to the detoxification of this compound that is generated by the action of gut microbiota from dietary precursors such as choline, choline containing compounds, betaine or L-carnitine. This chain is Flavin-containing monooxygenase 1 (FMO1), found in Oryctolagus cuniculus (Rabbit).